Here is a 559-residue protein sequence, read N- to C-terminus: Glypican-1 (559 aa).

The first 23 residues, 1–23 (MELRARGWWLLYAAAVLVACARG), serve as a signal peptide directing secretion. Intrachain disulfides connect Cys-32–Cys-68, Cys-62–Cys-256, Cys-69–Cys-259, Cys-191–Cys-343, Cys-246–Cys-279, Cys-268–Cys-415, and Cys-272–Cys-401. N-linked (GlcNAc...) asparagine glycans are attached at residues Asn-79 and Asn-116. The tract at residues 478 to 539 (FQDASDDGSG…SAAAPTPPQA (62 aa)) is disordered. O-linked (Xyl...) (heparan sulfate) serine glycosylation is found at Ser-486, Ser-488, and Ser-490. A lipid anchor (GPI-anchor amidated serine) is attached at Ser-530. A propeptide spans 531 to 559 (AAAPTPPQASPLLLLGLALALPAVAPRGR) (removed in mature form).

Belongs to the glypican family. S-nitrosylated in a Cu(2+)-dependent manner. Nitric acid (NO) is released from the nitrosylated cysteines by ascorbate or by some other reducing agent, in a Cu(2+) or Zn(2+) dependent manner. This free nitric oxide is then capable of cleaving the heparan sulfate side chains. Post-translationally, N- and O-glycosylated. N-glycosylation is mainly of the complex type containing sialic acid. O-glycosylated with heparan sulfate. The heparan sulfate chains can be cleaved either by the action of heparanase or, degraded by a deaminative process that uses nitric oxide (NO) released from the S-nitrosylated cysteines. This process is triggered by ascorbate, or by some other reducing agent, in a Cu(2+)- or Zn(2+) dependent manner. Cu(2+) ions are provided by ceruloproteins such as APP, PRNP or CP which associate with GCP1 in intracellular compartments or lipid rafts. In terms of processing, shed from the cell surface probably by further cleavage.

The protein resides in the cell membrane. It is found in the endosome. Its subcellular location is the secreted. It localises to the extracellular space. Its function is as follows. Cell surface proteoglycan that bears heparan sulfate. Binds, via the heparan sulfate side chains, alpha-4 (V) collagen and participates in Schwann cell myelination. May act as a catalyst in increasing the rate of conversion of prion protein PRPN (C) to PRNP (Sc) via associating (via the heparan sulfate side chains) with both forms of PRPN, targeting them to lipid rafts and facilitating their interaction. Required for proper skeletal muscle differentiation by sequestering FGF2 in lipid rafts preventing its binding to receptors (FGFRs) and inhibiting the FGF-mediated signaling. In Bos taurus (Bovine), this protein is Glypican-1 (GPC1).